Consider the following 227-residue polypeptide: Cytochrome c oxidase subunit 2 (227 aa).

At 1–14 (MAYPFQLGLQDATS) the chain is on the mitochondrial intermembrane side. Residues 15 to 45 (PIMEELTNFHDHTLMIVFLISSLVLYIISLM) traverse the membrane as a helical segment. Over 46–59 (LTTKLTHTSTMDAQ) the chain is Mitochondrial matrix. The chain crosses the membrane as a helical span at residues 60-87 (EVETIWTILPAVILILIALPSLRILYMM). Topologically, residues 88–227 (DEINNPVLTV…YFENWSASMI (140 aa)) are mitochondrial intermembrane. Residues His-161, Cys-196, Glu-198, Cys-200, His-204, and Met-207 each coordinate Cu cation. Glu-198 provides a ligand contact to Mg(2+). A Phosphotyrosine modification is found at Tyr-218.

This sequence belongs to the cytochrome c oxidase subunit 2 family. Component of the cytochrome c oxidase (complex IV, CIV), a multisubunit enzyme composed of 14 subunits. The complex is composed of a catalytic core of 3 subunits MT-CO1, MT-CO2 and MT-CO3, encoded in the mitochondrial DNA, and 11 supernumerary subunits COX4I, COX5A, COX5B, COX6A, COX6B, COX6C, COX7A, COX7B, COX7C, COX8 and NDUFA4, which are encoded in the nuclear genome. The complex exists as a monomer or a dimer and forms supercomplexes (SCs) in the inner mitochondrial membrane with NADH-ubiquinone oxidoreductase (complex I, CI) and ubiquinol-cytochrome c oxidoreductase (cytochrome b-c1 complex, complex III, CIII), resulting in different assemblies (supercomplex SCI(1)III(2)IV(1) and megacomplex MCI(2)III(2)IV(2)). Found in a complex with TMEM177, COA6, COX18, COX20, SCO1 and SCO2. Interacts with TMEM177 in a COX20-dependent manner. Interacts with COX20. Interacts with COX16. Requires Cu cation as cofactor.

The protein resides in the mitochondrion inner membrane. It carries out the reaction 4 Fe(II)-[cytochrome c] + O2 + 8 H(+)(in) = 4 Fe(III)-[cytochrome c] + 2 H2O + 4 H(+)(out). Functionally, component of the cytochrome c oxidase, the last enzyme in the mitochondrial electron transport chain which drives oxidative phosphorylation. The respiratory chain contains 3 multisubunit complexes succinate dehydrogenase (complex II, CII), ubiquinol-cytochrome c oxidoreductase (cytochrome b-c1 complex, complex III, CIII) and cytochrome c oxidase (complex IV, CIV), that cooperate to transfer electrons derived from NADH and succinate to molecular oxygen, creating an electrochemical gradient over the inner membrane that drives transmembrane transport and the ATP synthase. Cytochrome c oxidase is the component of the respiratory chain that catalyzes the reduction of oxygen to water. Electrons originating from reduced cytochrome c in the intermembrane space (IMS) are transferred via the dinuclear copper A center (CU(A)) of subunit 2 and heme A of subunit 1 to the active site in subunit 1, a binuclear center (BNC) formed by heme A3 and copper B (CU(B)). The BNC reduces molecular oxygen to 2 water molecules using 4 electrons from cytochrome c in the IMS and 4 protons from the mitochondrial matrix. The protein is Cytochrome c oxidase subunit 2 (MT-CO2) of Dacnomys millardi (Millard's rat).